The following is a 927-amino-acid chain: Sodium/calcium exchanger 3 (927 aa).

Residues 1 to 30 form the signal peptide; it reads MAWLRLQPLTSAFLHFGLVTFVLFLNGLRA. Over 31 to 73 the chain is Extracellular; that stretch reads EAGGSGDVPSTGQNNESCSGSSDCKEGVILPIWYPENPSLGDK. Asparagine 45 carries N-linked (GlcNAc...) asparagine glycosylation. Residues 74-94 traverse the membrane as a helical segment; the sequence is IARVIVYFVALIYMFLGVSII. Topologically, residues 95–147 are cytoplasmic; the sequence is ADRFMASIEVITSQEREVTIKKPNGETSTTTIRVWNETVSNLTLMALGSSAPE. The stretch at 140–180 is one Alpha-1 repeat; that stretch reads ALGSSAPEILLSLIEVCGHGFIAGDLGPSTIVGSAAFNMFI. Residues 148 to 168 traverse the membrane as a helical segment; it reads ILLSLIEVCGHGFIAGDLGPS. Threonine 169 is a topological domain (extracellular). Residues 170–190 traverse the membrane as a helical segment; sequence IVGSAAFNMFIIIGICVYVIP. Over 191-202 the chain is Cytoplasmic; it reads DGETRKIKHLRV. The helical transmembrane segment at 203 to 223 threads the bilayer; it reads FFITAAWSIFAYIWLYMILAV. Residues 224–230 are Extracellular-facing; sequence FSPGVVQ. A helical transmembrane segment spans residues 231-251; the sequence is VWEGLLTLFFFPVCVLLAWVA. Over 252-726 the chain is Cytoplasmic; sequence DKRLLFYKYM…DESGEERLPS (475 aa). Positions 253–272 are putative calmodulin-binding region; that stretch reads KRLLFYKYMHKKYRTDKHRG. Calx-beta domains are found at residues 386-485 and 519-619; these read VHTD…VRLS and ATVT…IALG. 15 residues coordinate Ca(2+): glutamate 409, aspartate 445, aspartate 470, aspartate 471, isoleucine 473, glutamate 475, glutamate 478, aspartate 525, aspartate 526, aspartate 527, glutamate 543, aspartate 579, glutamate 606, glutamate 607, and glutamate 672. The helical transmembrane segment at 727–747 threads the bilayer; sequence CFDYVMHFLTVFWKVLFACVP. The Extracellular segment spans residues 748-754; sequence PTEYCHG. A helical transmembrane segment spans residues 755 to 775; sequence WACFAVSILIIGMLTAIIGDL. The Cytoplasmic portion of the chain corresponds to 776-778; the sequence is ASH. The helical transmembrane segment at 779 to 799 threads the bilayer; it reads FGCTIGLKDSVTAVVFVAFGT. An Alpha-2 repeat occupies 796 to 832; sequence AFGTSVPDTFASKAAALQDVYADASIGNVTGSNAVNV. Residues 800 to 828 are Extracellular-facing; the sequence is SVPDTFASKAAALQDVYADASIGNVTGSN. The N-linked (GlcNAc...) asparagine glycan is linked to asparagine 823. The helical transmembrane segment at 829-849 threads the bilayer; the sequence is AVNVFLGIGLAWSVAAIYWAL. Residues 850 to 860 lie on the Cytoplasmic side of the membrane; it reads QGQEFHVSAGT. The chain crosses the membrane as a helical span at residues 861–881; sequence LAFSVTLFTIFAFVCISVLLY. The Extracellular segment spans residues 882–903; that stretch reads RRRPHLGGELGGPRGCKLATTW. A helical membrane pass occupies residues 904–924; the sequence is LFVSLWLLYILFATLEAYCYI. Topologically, residues 925–927 are cytoplasmic; that stretch reads KGF.

The protein belongs to the Ca(2+):cation antiporter (CaCA) (TC 2.A.19) family. SLC8 subfamily. As to quaternary structure, interacts with AKAP1. Isoform 2 is expressed in brain and skeletal muscle. Isoform 3 is expressed in excitable cells of brain, retina and skeletal muscle. Isoform 4 is expressed in skeletal muscle.

It localises to the cell membrane. The protein resides in the perikaryon. The protein localises to the cell projection. Its subcellular location is the dendrite. It is found in the dendritic spine. It localises to the sarcolemma. The protein resides in the cytoplasm. The protein localises to the sarcoplasm. Its subcellular location is the cell junction. It is found in the mitochondrion outer membrane. It localises to the perinuclear region. The protein resides in the endoplasmic reticulum membrane. It carries out the reaction Ca(2+)(in) + 3 Na(+)(out) = Ca(2+)(out) + 3 Na(+)(in). Calcium transport is down-regulated by Na(+) and stimulated by Ca(2+). Mediates the electrogenic exchange of Ca(2+) against Na(+) ions across the cell membrane, and thereby contributes to the regulation of cytoplasmic Ca(2+) levels and Ca(2+)-dependent cellular processes. Contributes to cellular Ca(2+) homeostasis in excitable cells, both in muscle and in brain. In a first phase, voltage-gated channels mediate the rapid increase of cytoplasmic Ca(2+) levels due to release of Ca(2+) stores from the endoplasmic reticulum. SLC8A3 mediates the export of Ca(2+) from the cell during the next phase, so that cytoplasmic Ca(2+) levels rapidly return to baseline. Contributes to Ca(2+) transport during excitation-contraction coupling in muscle. In neurons, contributes to the rapid decrease of cytoplasmic Ca(2+) levels back to baseline after neuronal activation, and thereby contributes to modulate synaptic plasticity, learning and memory. Required for normal oligodendrocyte differentiation and for normal myelination. Mediates Ca(2+) efflux from mitochondria and contributes to mitochondrial Ca(2+) ion homeostasis. The chain is Sodium/calcium exchanger 3 (SLC8A3) from Homo sapiens (Human).